A 158-amino-acid polypeptide reads, in one-letter code: Ribosome maturation factor RimP (158 aa).

The protein belongs to the RimP family.

It is found in the cytoplasm. Functionally, required for maturation of 30S ribosomal subunits. This Aquifex aeolicus (strain VF5) protein is Ribosome maturation factor RimP.